Here is a 340-residue protein sequence, read N- to C-terminus: MSDQRVIRAAAVQIAPDFERPGGTLDRVCAAIDEAASKGVQLIVFPETFVPYYPYFSFVRPPVASGADHMRLYEQAVVVPGPVTHAVSERARRHAMVVVLGVNERDHGSLYNTQLVFDIDGCQVLKRRKITPTFHERMIWGQGDAAGLKVARTGIARVGALACWEHYNPLARYALMTQHEEIHCSQFPGSLVGPIFAEQIEVTIRHHALESGCFVVNSTGWLSDAQIESVTTDPKLQKALRGGCMTAIVSPEGQHLAEPLREGEGMVVADLDMALITKRKRMMDSVGHYARPELLSLAINDRPAMPVVPMSMSFERAGADVAPEIISGGQDECQHEPVAG.

In terms of domain architecture, CN hydrolase spans 7-273 (IRAAAVQIAP…EGMVVADLDM (267 aa)). Glu47 acts as the Proton acceptor in catalysis. The active site involves Lys129. The active-site Nucleophile is the Cys163.

The protein belongs to the carbon-nitrogen hydrolase superfamily. Nitrilase family. In terms of assembly, forms oligomers.

It catalyses the reaction a nitrile + 2 H2O = a carboxylate + NH4(+). The enzyme catalyses phenylpropanonitrile + 2 H2O = 3-phenylpropanoate + NH4(+). The catalysed reaction is an aliphatic nitrile + 2 H2O = a carboxylate + NH4(+). Its activity is regulated as follows. Highly resistant to various miscible cosolvents and tolerates high substrate concentrations. Catalyzes the hydrolysis of a broad range of nitriles to yield their corresponding carboxylic acid and ammonia. In vitro, shows high activity toward benzylic/unsaturated nitriles. The preferred substrate is trans-cinnamonitrile, followed by mono/di-cyanopyridines and aromatic substituted nitriles, with a moderate activity toward 3-phenylpropionitrile. Shows weaker activity toward the common dinitrile fumaronitrile. Also shows weak activity toward some aliphatic nitriles, including adiponitrile and glutaronitrile, and the arylacetonitrile 2-thiopheneacetonitrile. The chain is Nitrilase from Paraburkholderia phymatum (strain DSM 17167 / CIP 108236 / LMG 21445 / STM815) (Burkholderia phymatum).